Here is a 618-residue protein sequence, read N- to C-terminus: Carotenoid cleavage dioxygenase 7, chloroplastic (618 aa).

The transit peptide at 1–31 directs the protein to the chloroplast; it reads MSLPIPPKFLPPLKSPPIHHHQTPPPLAPPR. A disordered region spans residues 11–34; sequence PPLKSPPIHHHQTPPPLAPPRAAI. Fe cation-binding residues include H266, H319, H398, and H612.

It belongs to the carotenoid oxygenase family. It depends on Fe(2+) as a cofactor. In terms of tissue distribution, expressed in flowers, siliques, inflorescence stems, petiole, leaves and roots.

It localises to the plastid. The protein resides in the chloroplast. The enzyme catalyses 9-cis-beta-carotene + O2 = 9-cis-10'-apo-beta-carotenal + beta-ionone. Functionally, involved in strigolactones biosynthesis by cleaving asymmetrically a variety of linear and cyclic carotenoids at the 9-10 double bond. Produces one C(13) beta-ionone and the C(27) 10'-apo-beta-carotenal. Strigolactones are hormones that inhibit tillering and shoot branching through the MAX-dependent pathway, contribute to the regulation of shoot architectural response to phosphate-limiting conditions and function as rhizosphere signal that stimulates hyphal branching of arbuscular mycorrhizal fungi and trigger seed germination of root parasitic weeds. No activity on lycopene, lutein, zeaxanthin, violaxanthin or neoxanthin. Probably not involved in abscisic acid biosynthesis. This is Carotenoid cleavage dioxygenase 7, chloroplastic (CCD7) from Arabidopsis thaliana (Mouse-ear cress).